The primary structure comprises 247 residues: Ribonuclease 3 (247 aa).

Positions 5 to 147 constitute an RNase III domain; sequence LIALQERLQH…LIGAVYLDAG (143 aa). Glu40 contributes to the Mg(2+) binding site. Asp44 is an active-site residue. A disordered region spans residues 104–124; the sequence is QRRSRRRCADELQPDEAGSGG. Mg(2+)-binding residues include Asp133 and Glu136. Residue Glu136 is part of the active site. The region spanning 174-244 is the DRBM domain; it reads DAKTALQEWL…AAAMLATLKA (71 aa).

The protein belongs to the ribonuclease III family. In terms of assembly, homodimer. The cofactor is Mg(2+).

It is found in the cytoplasm. The catalysed reaction is Endonucleolytic cleavage to 5'-phosphomonoester.. Its function is as follows. Digests double-stranded RNA. Involved in the processing of primary rRNA transcript to yield the immediate precursors to the large and small rRNAs (23S and 16S). Processes some mRNAs, and tRNAs when they are encoded in the rRNA operon. Processes pre-crRNA and tracrRNA of type II CRISPR loci if present in the organism. The sequence is that of Ribonuclease 3 from Verminephrobacter eiseniae (strain EF01-2).